We begin with the raw amino-acid sequence, 108 residues long: Nucleoid-associated protein BamMC406_1737 (108 aa).

Residues Ala85 to Thr95 are compositionally biased toward polar residues. Residues Ala85–Phe108 form a disordered region. Pro residues predominate over residues Pro99 to Phe108.

The protein belongs to the YbaB/EbfC family. In terms of assembly, homodimer.

The protein localises to the cytoplasm. Its subcellular location is the nucleoid. In terms of biological role, binds to DNA and alters its conformation. May be involved in regulation of gene expression, nucleoid organization and DNA protection. This is Nucleoid-associated protein BamMC406_1737 from Burkholderia ambifaria (strain MC40-6).